A 311-amino-acid polypeptide reads, in one-letter code: tRNA-cytidine(32) 2-sulfurtransferase (311 aa).

The short motif at serine 47–serine 52 is the PP-loop motif element. Residues cysteine 122, cysteine 125, and cysteine 213 each coordinate [4Fe-4S] cluster.

This sequence belongs to the TtcA family. Homodimer. The cofactor is Mg(2+). [4Fe-4S] cluster is required as a cofactor.

The protein localises to the cytoplasm. It catalyses the reaction cytidine(32) in tRNA + S-sulfanyl-L-cysteinyl-[cysteine desulfurase] + AH2 + ATP = 2-thiocytidine(32) in tRNA + L-cysteinyl-[cysteine desulfurase] + A + AMP + diphosphate + H(+). The protein operates within tRNA modification. In terms of biological role, catalyzes the ATP-dependent 2-thiolation of cytidine in position 32 of tRNA, to form 2-thiocytidine (s(2)C32). The sulfur atoms are provided by the cysteine/cysteine desulfurase (IscS) system. This chain is tRNA-cytidine(32) 2-sulfurtransferase, found in Salmonella paratyphi B (strain ATCC BAA-1250 / SPB7).